The following is a 748-amino-acid chain: 5-methyltetrahydropteroyltriglutamate--homocysteine methyltransferase (748 aa).

Lysine 111 contacts 5-methyltetrahydropteroyltri-L-glutamate. L-homocysteine contacts are provided by residues 428-430 (IGS) and glutamate 478. Residues 428–430 (IGS) and glutamate 478 contribute to the L-methionine site. 5-methyltetrahydropteroyltri-L-glutamate is bound by residues 509 to 510 (RC) and tryptophan 555. Aspartate 593 serves as a coordination point for L-homocysteine. Residue aspartate 593 coordinates L-methionine. Glutamate 599 contacts 5-methyltetrahydropteroyltri-L-glutamate. Residues histidine 635, cysteine 637, and glutamate 659 each contribute to the Zn(2+) site. Histidine 687 serves as the catalytic Proton donor. Cysteine 719 contributes to the Zn(2+) binding site.

It belongs to the vitamin-B12 independent methionine synthase family. Zn(2+) is required as a cofactor.

It catalyses the reaction 5-methyltetrahydropteroyltri-L-glutamate + L-homocysteine = tetrahydropteroyltri-L-glutamate + L-methionine. It participates in amino-acid biosynthesis; L-methionine biosynthesis via de novo pathway; L-methionine from L-homocysteine (MetE route): step 1/1. In terms of biological role, catalyzes the transfer of a methyl group from 5-methyltetrahydrofolate to homocysteine resulting in methionine formation. This is 5-methyltetrahydropteroyltriglutamate--homocysteine methyltransferase from Herpetosiphon aurantiacus (strain ATCC 23779 / DSM 785 / 114-95).